We begin with the raw amino-acid sequence, 1780 residues long: Callose synthase 12 (1780 aa).

The Cytoplasmic segment spans residues 1 to 302 (MSLRHRTVPP…ERRTFFYLYR (302 aa)). A helical transmembrane segment spans residues 303 to 323 (SFDRLWVMLALFLQAAIIVAW). At 324–348 (EEKPDTSSVTRQLWNALKARDVQVR) the chain is on the extracellular side. Residues 349–369 (LLTVFLTWSGMRLLQAVLDAA) form a helical membrane-spanning segment. Residues 370-386 (SQYPLVSRETKRHFFRM) are Cytoplasmic-facing. A helical membrane pass occupies residues 387 to 407 (LMKVIAAAVWIVAFTVLYTNI). Residues 408–427 (WKQKRQDRQWSNAATTKIYQ) lie on the Extracellular side of the membrane. A helical transmembrane segment spans residues 428 to 448 (FLYAVGAFLVPEILALALFII). Over 449-489 (PWMRNFLEETNWKIFFALTWWFQGKSFVGRGLREGLVDNIK) the chain is Cytoplasmic. Residues 490 to 510 (YSTFWIFVLATKFTFSYFLQV) traverse the membrane as a helical segment. The Extracellular segment spans residues 511–542 (KPMIKPSKLLWNLKDVDYEWHQFYGDSNRFSV). A helical transmembrane segment spans residues 543-563 (ALLWLPVVLIYLMDIQIWYAI). Over 564-1348 (YSSIVGAVVG…FFRMLSFFYT (785 aa)) the chain is Cytoplasmic. A helical transmembrane segment spans residues 1349–1369 (TVGFFFNTMMVILTVYAFLWG). At 1370–1394 (RVYLALSGVEKSALADSTDTNAALG) the chain is on the extracellular side. Residues 1395 to 1415 (VILNQQFIIQLGLFTALPMIV) form a helical membrane-spanning segment. Residues 1416–1421 (EWSLEE) are Cytoplasmic-facing. Residues 1422–1442 (GFLLAIWNFIRMQIQLSAVFY) form a helical membrane-spanning segment. Residues 1443 to 1489 (TFSMGTRAHYFGRTILHGGAKYRATGRGFVVEHKGFTENYRLYARSH) are Extracellular-facing. Residues 1490 to 1510 (FVKAIELGLILIVYASHSPIA) traverse the membrane as a helical segment. Topologically, residues 1511 to 1516 (KDSLIY) are cytoplasmic. A helical membrane pass occupies residues 1517 to 1537 (IAMTITSWFLVISWIMAPFVF). The Extracellular segment spans residues 1538–1588 (NPSGFDWLKTVYDFEDFMNWIWYQGRISTKSEQSWEKWWYEEQDHLRNTGK). Residues 1589 to 1609 (AGLFVEIILVLRFFFFQYGIV) traverse the membrane as a helical segment. Residues 1610–1620 (YQLKIANGSTS) lie on the Cytoplasmic side of the membrane. The helical transmembrane segment at 1621–1641 (LFVYLFSWIYIFAIFVLFLVI) threads the bilayer. The Extracellular segment spans residues 1642–1657 (QYARDKYSAKAHIRYR). Residues 1658–1678 (LVQFLLIVLAILVIVALLEFT) form a helical membrane-spanning segment. Residues 1679-1681 (HFS) are Cytoplasmic-facing. A helical transmembrane segment spans residues 1682 to 1702 (FIDIFTSLLAFIPTGWGILLI). Residues 1703 to 1728 (AQTQRKWLKNYTIFWNAVVSVARMYD) lie on the Extracellular side of the membrane. Asn1712 is a glycosylation site (N-linked (GlcNAc...) asparagine). The chain crosses the membrane as a helical span at residues 1729-1749 (ILFGILIMVPVAFLSWMPGFQ). Residues 1750–1780 (SMQTRILFNEAFSRGLRIMQIVTGKKSKGDV) lie on the Cytoplasmic side of the membrane.

It belongs to the glycosyltransferase 48 family. As to expression, highly expressed in flowers. Expressed at low levels in roots, leaves, stems, cauline leaves and siliques.

It is found in the cell membrane. It carries out the reaction [(1-&gt;3)-beta-D-glucosyl](n) + UDP-alpha-D-glucose = [(1-&gt;3)-beta-D-glucosyl](n+1) + UDP + H(+). Involved in sporophytic and gametophytic development. Required for normal leaf development. During pollen formation, required for the formation of the callose wall separating the tetraspores of the tetrad (interstitial wall), but not for the callose wall surrounding the pollen mother cells (peripheral wall). Functionally redudant to CALS11 (GSL1). May play a role later in pollen grain maturation. Required for callose formation induced by wounding and pathogen attack. May interfere with salicylic acid-induced signaling pathway during defense response. During plant growth and development, callose is found as a transitory component of the cell plate in dividing cells, is a major component of pollen mother cell walls and pollen tubes, and is found as a structural component of plasmodesmatal canals. This is Callose synthase 12 (CALS12) from Arabidopsis thaliana (Mouse-ear cress).